We begin with the raw amino-acid sequence, 297 residues long: MLRLGSHVSMSGKKMLLGASEEAASYGSNTFMIYTGAPQNTRRKPIEELNIEAGLEHMKAHDMADIVVHAPYIINIGNSVKPETFELGVNFLQSEIERTRALGAKQIVLHPGAHVGEGADKGIKQIIQGLNEALIHDQDVQIALETMAGKGSECGRTFEELAQIIDGVTHNELLSVTFDTCHTHDAGYDIVNDFDGVLNQFDKIVGIDRLKVLHINDSKNERGAHKDRHANIGFGHIGFDALHYIVHHPQLADVPKILETPYVGGDKASKKAPYKWEIAMLKNGEFDPDLLNKIQNS.

Residues H69, H110, E145, D179, H182, H214, D227, H229, and E259 each coordinate Zn(2+).

Belongs to the AP endonuclease 2 family. Requires Zn(2+) as cofactor.

It carries out the reaction Endonucleolytic cleavage to 5'-phosphooligonucleotide end-products.. In terms of biological role, endonuclease IV plays a role in DNA repair. It cleaves phosphodiester bonds at apurinic or apyrimidinic (AP) sites, generating a 3'-hydroxyl group and a 5'-terminal sugar phosphate. This is Probable endonuclease 4 from Listeria monocytogenes serovar 1/2a (strain ATCC BAA-679 / EGD-e).